The chain runs to 54 residues: MKKYVCVVCGYIYDPAEGDPDNGVNPGTSFEDIPDDWVCPLCGVGKDQFEPSEE.

In terms of domain architecture, Rubredoxin-like spans 1–54; that stretch reads MKKYVCVVCGYIYDPAEGDPDNGVNPGTSFEDIPDDWVCPLCGVGKDQFEPSEE. The Fe cation site is built by cysteine 6, cysteine 9, cysteine 39, and cysteine 42.

This sequence belongs to the rubredoxin family. The cofactor is Fe(3+).

Its function is as follows. Rubredoxin is a small nonheme, iron protein lacking acid-labile sulfide. Its single Fe, chelated to 4 Cys, functions as an electron acceptor and may also stabilize the conformation of the molecule. Functions as an intermediate component in the electron transfer chain: NADH-&gt;NROR-&gt;Rd-&gt;FprA1/2 in which Rd serves as the proximal electron donor to the FDPs that exhibit H(2)O-forming NADH oxidase activity. Also functions as the proximal electron donor to the Dfx and revRbr proteins that display superoxide reductase (SOR) and NADH peroxidase activity, respectively. Therefore, is a key electron carrier in an efficient multienzyme complex that can scavenge O(2) and reactive oxygen species (ROS), and thus plays an important role in the oxidative stress defense system in C.acetobutylicum, an obligate anaerobic bacterium. The polypeptide is Rubredoxin (rd) (Clostridium acetobutylicum (strain ATCC 824 / DSM 792 / JCM 1419 / IAM 19013 / LMG 5710 / NBRC 13948 / NRRL B-527 / VKM B-1787 / 2291 / W)).